An 89-amino-acid chain; its full sequence is Thoeris anti-defense 2 (89 aa).

Trp-25 and Asn-26 together coordinate 3'cADPR. Ser-42 is a binding site for Mg(2+). Positions 73 and 79 each coordinate 3'cADPR.

Homotetramer.

In terms of biological role, counteracts the host Thoeris antiviral defense system. Probably acts by binding and sequestering cyclic ADP-D-ribose signal molecules produced upon viral infection (3'cADPR or 2'cADPR); sequestration prevents the signal from activating the ThsA of the Thoeris antiviral defense system. In Bacillus phage SP01 (Bacteriophage SP01), this protein is Thoeris anti-defense 2.